Here is a 295-residue protein sequence, read N- to C-terminus: Multistep phosphorelay regulator 1 (295 aa).

Residues 89–110 (KSENNQQLAANETAGAPEGTEE) form a disordered region. The segment covering 97 to 106 (AANETAGAPE) has biased composition (low complexity). One can recognise an HPt domain in the interval 182-284 (EHEFSKSIVW…NDFYKDARAY (103 aa)). Phosphohistidine is present on H221.

Functionally, binds to the msc4 response regulator which is part of a multistep phosphorelay system that transmits oxidative stress signals to the spc1 MAPK cascade. This is Multistep phosphorelay regulator 1 (mpr1) from Schizosaccharomyces pombe (strain 972 / ATCC 24843) (Fission yeast).